Reading from the N-terminus, the 362-residue chain is 3-dehydroquinate synthase (362 aa).

NAD(+) contacts are provided by residues 71-76 (DGEQYK), 105-109 (GVVGD), 129-130 (TT), K142, K151, and 169-172 (CLKT). Zn(2+)-binding residues include E184, H247, and H264.

Belongs to the sugar phosphate cyclases superfamily. Dehydroquinate synthase family. Co(2+) is required as a cofactor. Requires Zn(2+) as cofactor. The cofactor is NAD(+).

It localises to the cytoplasm. It carries out the reaction 7-phospho-2-dehydro-3-deoxy-D-arabino-heptonate = 3-dehydroquinate + phosphate. It participates in metabolic intermediate biosynthesis; chorismate biosynthesis; chorismate from D-erythrose 4-phosphate and phosphoenolpyruvate: step 2/7. Its function is as follows. Catalyzes the conversion of 3-deoxy-D-arabino-heptulosonate 7-phosphate (DAHP) to dehydroquinate (DHQ). The sequence is that of 3-dehydroquinate synthase from Shigella dysenteriae serotype 1 (strain Sd197).